A 130-amino-acid chain; its full sequence is MIGNWNYGTGRRKSAVARVFIKSGKGDIIVNGKPIKEYFARETSLMIVRQPLELTAHAETFDIKVNVTGGGETGQAGAVRHGITRALIDYDATLKPTLSKAGYVTRDAREVERKKVGLHKARRRKQFSKR.

Belongs to the universal ribosomal protein uS9 family.

This is Small ribosomal subunit protein uS9 from Cupriavidus metallidurans (strain ATCC 43123 / DSM 2839 / NBRC 102507 / CH34) (Ralstonia metallidurans).